The sequence spans 479 residues: Aspartyl/glutamyl-tRNA(Asn/Gln) amidotransferase subunit B (479 aa).

This sequence belongs to the GatB/GatE family. GatB subfamily. Heterotrimer of A, B and C subunits.

The catalysed reaction is L-glutamyl-tRNA(Gln) + L-glutamine + ATP + H2O = L-glutaminyl-tRNA(Gln) + L-glutamate + ADP + phosphate + H(+). It carries out the reaction L-aspartyl-tRNA(Asn) + L-glutamine + ATP + H2O = L-asparaginyl-tRNA(Asn) + L-glutamate + ADP + phosphate + 2 H(+). Functionally, allows the formation of correctly charged Asn-tRNA(Asn) or Gln-tRNA(Gln) through the transamidation of misacylated Asp-tRNA(Asn) or Glu-tRNA(Gln) in organisms which lack either or both of asparaginyl-tRNA or glutaminyl-tRNA synthetases. The reaction takes place in the presence of glutamine and ATP through an activated phospho-Asp-tRNA(Asn) or phospho-Glu-tRNA(Gln). The protein is Aspartyl/glutamyl-tRNA(Asn/Gln) amidotransferase subunit B of Geotalea uraniireducens (strain Rf4) (Geobacter uraniireducens).